The primary structure comprises 334 residues: Glycerol-3-phosphate dehydrogenase [NAD(P)+] 2 (334 aa).

NADPH-binding residues include tryptophan 16, arginine 36, arginine 37, and lysine 110. Sn-glycerol 3-phosphate is bound by residues lysine 110 and glycine 140. Alanine 144 is an NADPH binding site. 5 residues coordinate sn-glycerol 3-phosphate: lysine 195, aspartate 248, serine 258, arginine 259, and asparagine 260. Lysine 195 serves as the catalytic Proton acceptor. Arginine 259 is a binding site for NADPH. Residues valine 282 and glutamate 284 each contribute to the NADPH site.

The protein belongs to the NAD-dependent glycerol-3-phosphate dehydrogenase family.

The protein resides in the cytoplasm. The enzyme catalyses sn-glycerol 3-phosphate + NAD(+) = dihydroxyacetone phosphate + NADH + H(+). It catalyses the reaction sn-glycerol 3-phosphate + NADP(+) = dihydroxyacetone phosphate + NADPH + H(+). It participates in membrane lipid metabolism; glycerophospholipid metabolism. Catalyzes the reduction of the glycolytic intermediate dihydroxyacetone phosphate (DHAP) to sn-glycerol 3-phosphate (G3P), the key precursor for phospholipid synthesis. The polypeptide is Glycerol-3-phosphate dehydrogenase [NAD(P)+] 2 (Mycobacterium bovis (strain ATCC BAA-935 / AF2122/97)).